A 189-amino-acid chain; its full sequence is Rho-related protein racM (189 aa).

Residue 12-19 (GDYGVGKT) coordinates GTP. The Effector region signature appears at 35-43 (YVPTALDNF). Residues 60–64 (DTAGG) and 118–121 (TKID) contribute to the GTP site. Cysteine 186 bears the Cysteine methyl ester mark. Cysteine 186 carries the S-geranylgeranyl cysteine lipid modification. Positions 187–189 (IIL) are cleaved as a propeptide — removed in mature form.

It belongs to the small GTPase superfamily. Rho family.

The protein resides in the cell membrane. This chain is Rho-related protein racM (racM), found in Dictyostelium discoideum (Social amoeba).